Consider the following 187-residue polypeptide: Peptidyl-tRNA hydrolase (187 aa).

Tyrosine 15 provides a ligand contact to tRNA. Residue histidine 20 is the Proton acceptor of the active site. TRNA-binding residues include tyrosine 64, asparagine 66, and asparagine 112.

This sequence belongs to the PTH family. As to quaternary structure, monomer.

The protein resides in the cytoplasm. It catalyses the reaction an N-acyl-L-alpha-aminoacyl-tRNA + H2O = an N-acyl-L-amino acid + a tRNA + H(+). Its function is as follows. Hydrolyzes ribosome-free peptidyl-tRNAs (with 1 or more amino acids incorporated), which drop off the ribosome during protein synthesis, or as a result of ribosome stalling. In terms of biological role, catalyzes the release of premature peptidyl moieties from peptidyl-tRNA molecules trapped in stalled 50S ribosomal subunits, and thus maintains levels of free tRNAs and 50S ribosomes. This chain is Peptidyl-tRNA hydrolase, found in Phocaeicola vulgatus (strain ATCC 8482 / DSM 1447 / JCM 5826 / CCUG 4940 / NBRC 14291 / NCTC 11154) (Bacteroides vulgatus).